Consider the following 287-residue polypeptide: uncharacterized protein (287 aa).

The disordered stretch occupies residues 1–23 (MTVSDSPAQRQTPPQTPGGTAPR). The span at 7–23 (PAQRQTPPQTPGGTAPR) shows a compositional bias: low complexity. The Mg(2+) site is built by Asp-31, Asp-33, and Asp-204.

It belongs to the HAD-like hydrolase superfamily. SerB family.

This is an uncharacterized protein from Mycobacterium tuberculosis (strain CDC 1551 / Oshkosh).